We begin with the raw amino-acid sequence, 582 residues long: MKRSMYAGRVREEHIGTTITLKGWVSRRRDLGGLIFIDLRDREGVMQLVINPEEVSSDVMATAERLRSEYVIEVEGFVEARQQANDKLATGMVELKVSALTILNTAKTTPFEIKDDVEVSDDTRLRYRYLDLRRPEMLENFKLRAKVTHSIRNYLDDLEFIDVETPMLTKSTPEGARDYLVPSRVSQGHFYALPQSPQITKQLLMNAGFDRYYQIVKCFRDEDLRGDRQPEFTQVDLETSFLSEQEIQDIVEGMIAKVMKETKEIDVTLPFPRMSYDVAMNSYGSDKPDTRFEMLLQDLTVTVKGNDFKVFSEAPAVKAIVVKGNADRYSRKDIDKLTEFAKQFGAKGLAWVKVTDGQLAGPVAKFLTAIETELSSQLKLAENDLVLFVADTLEVANNTLGALRNRIAKDLDMIDQSQFNFLWVVDWPMFEWSEEEGRYMSAHHPFTLPTPESAHELEGDLAKVRAIAYDIVLNGYELGGGSLRINQKEMQERMFKALGFTADEANDQFGFLLEAMDYGFPPHGGLAIGLDRFVMLLAGKDNIREVIAFPKNNKASDPMTQAPSLVSENQLEELSLQIESHD.

Position 174 (Glu174) interacts with L-aspartate. The tract at residues 198 to 201 (QITK) is aspartate. Arg220 contacts L-aspartate. ATP-binding positions include 220-222 (RDE) and Gln229. His443 contributes to the L-aspartate binding site. An ATP-binding site is contributed by Glu477. L-aspartate is bound at residue Arg484. Residue 529 to 532 (GLDR) coordinates ATP.

The protein belongs to the class-II aminoacyl-tRNA synthetase family. Type 1 subfamily. As to quaternary structure, homodimer.

The protein localises to the cytoplasm. It catalyses the reaction tRNA(Asp) + L-aspartate + ATP = L-aspartyl-tRNA(Asp) + AMP + diphosphate. Functionally, catalyzes the attachment of L-aspartate to tRNA(Asp) in a two-step reaction: L-aspartate is first activated by ATP to form Asp-AMP and then transferred to the acceptor end of tRNA(Asp). In Streptococcus pyogenes serotype M1, this protein is Aspartate--tRNA ligase.